The sequence spans 215 residues: Protein ERP2 (215 aa).

A signal peptide spans 1–25; it reads MIKSTIALPSFFIVLILALVNSVAA. Residues 26-182 lie on the Lumenal side of the membrane; that stretch reads SSSYAPVAIS…TVNSTESRLT (157 aa). The GOLD domain occupies 41–123; it reads KECLYYDMVT…LKKVEITLEK (83 aa). A helical membrane pass occupies residues 183–203; it reads WLSILIIIIIAVISIAQVLLI. Topologically, residues 204-215 are cytoplasmic; that stretch reads QFLFTGRQKNYV.

Belongs to the EMP24/GP25L family. In terms of assembly, associates with EMP24, ERV25 and ERP1.

The protein localises to the endoplasmic reticulum membrane. In terms of biological role, involved in vesicular protein trafficking. This chain is Protein ERP2 (ERP2), found in Saccharomyces cerevisiae (strain ATCC 204508 / S288c) (Baker's yeast).